The primary structure comprises 2670 residues: Inositol 1,4,5-trisphosphate-gated calcium channel ITPR3 (2670 aa).

The Cytoplasmic portion of the chain corresponds to 1–2201 (MNEMSSFLHI…LIYWFSRRMT (2201 aa)). MIR domains lie at 113-173 (GDVV…LRSN), 174-224 (GDNV…INLF), 232-288 (EEVL…VEVV), 295-372 (GGAG…LDPT), and 378-434 (DSFV…IVSV). Residues Arg-266, Thr-268, Leu-269, and Arg-270 each contribute to the 1D-myo-inositol 1,4,5-trisphosphate site. A disordered region spans residues 321-344 (PSYKGDVSDPKAAGPGAQSRTGRR). Residues Arg-503, Lys-507, Arg-510, Tyr-567, Arg-568, and Lys-569 each contribute to the 1D-myo-inositol 1,4,5-trisphosphate site. Residue Arg-743 participates in Ca(2+) binding. 2 positions are modified to phosphoserine: Ser-916 and Ser-934. The Ca(2+) site is built by Glu-1122 and Glu-1125. Basic and acidic residues predominate over residues 1134 to 1153 (VKGEEGEAGASKDKKERPSD). Disordered regions lie at residues 1134–1164 (VKGEEGEAGASKDKKERPSDEEGFLQPHGEK) and 1807–1849 (NMSD…GLHR). Phosphoserine is present on residues Ser-1813, Ser-1832, and Ser-1834. Residues 1831-1842 (SSFSMPSSSRYS) show a composition bias toward low complexity. Positions 1881 and 1945 each coordinate Ca(2+). The ATP site is built by Ala-1995, Glu-2148, and Lys-2151. A helical transmembrane segment spans residues 2202–2222 (LWGSISFNLAVFINIIIAFFY). Residues 2223–2233 (PYVEGASTGVL) are Extracellular-facing. Residues 2234-2254 (GSPLISLLFWILICFSIAALF) traverse the membrane as a helical segment. Over 2255 to 2263 (TKHYSVRPL) the chain is Cytoplasmic. A helical transmembrane segment spans residues 2264–2284 (IVALVLRSIYYLGIGPTLNIL). The Extracellular portion of the chain corresponds to 2285 to 2324 (GALNLTNKIVFVVSFVGNRGTFIRGYKAMVMDMEFLYHVG). A helical membrane pass occupies residues 2325–2345 (YILTSVLGLFAHELFYSILLF). Topologically, residues 2346 to 2367 (DLIYREETLFNVIKSVTRNGRS) are cytoplasmic. Residues 2368–2388 (ILLTALLALILVYLFSIVGFL) traverse the membrane as a helical segment. The Extracellular segment spans residues 2389–2495 (FLKDDFILEV…ESLFPARVVY (107 aa)). The cysteines at positions 2454 and 2460 are disulfide-linked. Residues 2496–2516 (DLLFFFIVIIIVLNLIFGVII) traverse the membrane as a helical segment. At 2517-2670 (DTFADLRSEK…FVDVQNCMSR (154 aa)) the chain is on the cytoplasmic side. ATP contacts are provided by Cys-2537 and Phe-2538. Residue Cys-2537 participates in Zn(2+) binding. Positions 2540 and 2557 each coordinate Zn(2+). The ATP site is built by Lys-2559, His-2562, Asn-2563, and Met-2564. His-2562 lines the Zn(2+) pocket. Thr-2580 lines the Ca(2+) pocket. Phosphoserine occurs at positions 2608 and 2669.

The protein belongs to the InsP3 receptor family. Homotetramer. Homodimer. Interacts with TRPC1 and TRPC3. Interacts with TRPC4. Interacts with TRPV4. Interacts with SIGMAR1. Interacts with AKT1 and PML. Interacts with IRAG2 (via coiled-coil domain). Interacts with CABP1. Interacts with TMBIM4/LFG4. Interacts with CEMIP. Interacts with TESPA1. Interacts with TMEM203. Interacts with BOK; regulates ITPR3 expression. Interacts with BCL2L10. Interacts with CHGA and CHGB. Phosphorylated by AKT1 on serine and/or threonine residues.

The protein localises to the endoplasmic reticulum membrane. Its subcellular location is the cytoplasmic vesicle. The protein resides in the secretory vesicle membrane. The enzyme catalyses Ca(2+)(in) = Ca(2+)(out). Inositol 1,4,5-trisphosphate-gated calcium channel is regulated by cytosolic calcium in a biphasic manner. At low concentrations, cytosolic calcium binds at a high-affinity juxtamembrane domain (JD) calcium binding site, allowing ITPR3 to activate by escaping a low-energy resting state through an ensemble of preactivated states. At high cytosolic calcium concentrations, ITPR3 preferentially enters an inhibited state stabilized by calcium binding at a second, low-affinity cytoplasmic domain (CD) calcium binding site. In terms of biological role, inositol 1,4,5-trisphosphate-gated calcium channel that, upon 1D-myo-inositol 1,4,5-trisphosphate binding, transports calcium from the endoplasmic reticulum lumen to cytoplasm, thus releasing the intracellular calcium and therefore participates in cellular calcium ion homeostasis. 11D-myo-inositol 1,4,5-trisphosphate binds to the ligand-free channel without altering its global conformation, yielding the low-energy resting state, then progresses through resting-to preactivated transitions to the higher energy preactivated state, which increases affinity for calcium, promoting binding of the low basal cytosolic calcium at the juxtamembrane domain (JD) site, favoring the transition through the ensemble of high-energy intermediate states along the trajectory to the fully-open activated state. Upon opening, releases calcium in the cytosol where it can bind to the low-affinity cytoplasmic domain (CD) site and stabilizes the inhibited state to terminate calcium release. In Rattus norvegicus (Rat), this protein is Inositol 1,4,5-trisphosphate-gated calcium channel ITPR3.